The following is a 228-amino-acid chain: Phosphatidylglycerophosphate phosphatase PTPMT2 (228 aa).

A compositionally biased stretch (acidic residues) spans M1–T10. Residues M1–K30 form a disordered region. Substrate-binding residues include Y48 and D126. A Tyrosine-protein phosphatase domain is found at W66–P213. C157 (phosphocysteine intermediate) is an active-site residue. The Glucan phosphatase signature motif CXAGXGR signature appears at C157 to R163. A substrate-binding site is contributed by K158 to R163.

It belongs to the protein-tyrosine phosphatase family. Non-receptor class dual specificity subfamily. Expressed in roots, leaves, stems and flowers. In terms of tissue distribution, expressed at low levels in stems and flowers.

It catalyses the reaction O-phospho-L-seryl-[protein] + H2O = L-seryl-[protein] + phosphate. It carries out the reaction O-phospho-L-threonyl-[protein] + H2O = L-threonyl-[protein] + phosphate. The enzyme catalyses O-phospho-L-tyrosyl-[protein] + H2O = L-tyrosyl-[protein] + phosphate. The catalysed reaction is a 1,2-diacyl-sn-glycero-3-phospho-(1'-sn-glycero-3'-phosphate) + H2O = a 1,2-diacyl-sn-glycero-3-phospho-(1'-sn-glycerol) + phosphate. The protein operates within phospholipid metabolism; phosphatidylglycerol biosynthesis; phosphatidylglycerol from CDP-diacylglycerol: step 2/2. In terms of biological role, exhibits phosphatidylglycerophosphate phosphatase activity. Involved in root growth and columella cells organization. May possess protein phosphatase activity. This chain is Phosphatidylglycerophosphate phosphatase PTPMT2, found in Arabidopsis thaliana (Mouse-ear cress).